We begin with the raw amino-acid sequence, 1482 residues long: Chromosome partition protein MukB (1482 aa).

34-41 (GGNGAGKS) lines the ATP pocket. Residues 333-665 (ASDHLNLVQT…LEKQIERLSQ (333 aa)) adopt a coiled-coil conformation. The tract at residues 666–783 (PSGAEDSRMI…ELPLFGRAAR (118 aa)) is flexible hinge. 2 coiled-coil regions span residues 784-1116 (ENRL…AKAG) and 1209-1260 (VDAI…MLNQ).

The protein belongs to the SMC family. MukB subfamily. In terms of assembly, homodimerization via its hinge domain. Binds to DNA via its C-terminal region. Interacts, and probably forms a ternary complex, with MukE and MukF via its C-terminal region. The complex formation is stimulated by calcium or magnesium. Interacts with tubulin-related protein FtsZ.

Its subcellular location is the cytoplasm. It localises to the nucleoid. Functionally, plays a central role in chromosome condensation, segregation and cell cycle progression. Functions as a homodimer, which is essential for chromosome partition. Involved in negative DNA supercoiling in vivo, and by this means organize and compact chromosomes. May achieve or facilitate chromosome segregation by condensation DNA from both sides of a centrally located replisome during cell division. The polypeptide is Chromosome partition protein MukB (Photorhabdus laumondii subsp. laumondii (strain DSM 15139 / CIP 105565 / TT01) (Photorhabdus luminescens subsp. laumondii)).